An 830-amino-acid chain; its full sequence is Periplasmic nitrate reductase (830 aa).

Positions 1–31 (MKLSRRDFMKANAAVAAAAAAGMTIPTVAKA) form a signal peptide, tat-type signal. Positions 39–95 (IKWDKAPCRFCGTGCGVLVGTQNGRIVASQGDPDSPVNRGLNCIKGYFLPKIMYGKD) constitute a 4Fe-4S Mo/W bis-MGD-type domain. Residues C46, C49, C53, and C81 each coordinate [4Fe-4S] cluster. Mo-bis(molybdopterin guanine dinucleotide)-binding positions include K83, Q150, N175, C179, 212–219 (WGSNMAEM), 243–247 (STYEH), 262–264 (QTD), M372, Q376, N482, 508–509 (SD), K531, D558, and 718–727 (TGRVLEHWHT). Residue F794 participates in substrate binding. The Mo-bis(molybdopterin guanine dinucleotide) site is built by N802 and K819.

It belongs to the prokaryotic molybdopterin-containing oxidoreductase family. NasA/NapA/NarB subfamily. As to quaternary structure, component of the periplasmic nitrate reductase NapAB complex composed of NapA and NapB. The cofactor is [4Fe-4S] cluster. Mo-bis(molybdopterin guanine dinucleotide) serves as cofactor. Post-translationally, predicted to be exported by the Tat system. The position of the signal peptide cleavage has not been experimentally proven.

It localises to the periplasm. The catalysed reaction is 2 Fe(II)-[cytochrome] + nitrate + 2 H(+) = 2 Fe(III)-[cytochrome] + nitrite + H2O. In terms of biological role, catalytic subunit of the periplasmic nitrate reductase complex NapAB. Receives electrons from NapB and catalyzes the reduction of nitrate to nitrite. The protein is Periplasmic nitrate reductase of Yersinia pestis bv. Antiqua (strain Antiqua).